The sequence spans 32 residues: Protamine S4 (32 aa).

Residues 1–32 form a disordered region; sequence GCKKRKARKRPKCKKARKRPKCKRRKVAKKKC.

Testis.

It is found in the nucleus. Its subcellular location is the chromosome. Its function is as follows. Protamines substitute for histones in the chromatin of sperm during the haploid phase of spermatogenesis. They compact sperm DNA into a highly condensed, stable and inactive complex. The protein is Protamine S4 of Scyliorhinus canicula (Small-spotted catshark).